We begin with the raw amino-acid sequence, 176 residues long: Adenine phosphoribosyltransferase (176 aa).

The protein belongs to the purine/pyrimidine phosphoribosyltransferase family. In terms of assembly, homodimer.

It localises to the cytoplasm. The catalysed reaction is AMP + diphosphate = 5-phospho-alpha-D-ribose 1-diphosphate + adenine. It participates in purine metabolism; AMP biosynthesis via salvage pathway; AMP from adenine: step 1/1. Catalyzes a salvage reaction resulting in the formation of AMP, that is energically less costly than de novo synthesis. This chain is Adenine phosphoribosyltransferase, found in Gluconacetobacter diazotrophicus (strain ATCC 49037 / DSM 5601 / CCUG 37298 / CIP 103539 / LMG 7603 / PAl5).